We begin with the raw amino-acid sequence, 323 residues long: Beta-ketoacyl-[acyl-carrier-protein] synthase III (323 aa).

Active-site residues include cysteine 113 and histidine 250. An ACP-binding region spans residues 251–255 (QANKR). Asparagine 280 is an active-site residue.

It belongs to the thiolase-like superfamily. FabH family. As to quaternary structure, homodimer.

It is found in the cytoplasm. The catalysed reaction is malonyl-[ACP] + acetyl-CoA + H(+) = 3-oxobutanoyl-[ACP] + CO2 + CoA. It functions in the pathway lipid metabolism; fatty acid biosynthesis. Its function is as follows. Catalyzes the condensation reaction of fatty acid synthesis by the addition to an acyl acceptor of two carbons from malonyl-ACP. Catalyzes the first condensation reaction which initiates fatty acid synthesis and may therefore play a role in governing the total rate of fatty acid production. Possesses both acetoacetyl-ACP synthase and acetyl transacylase activities. Its substrate specificity determines the biosynthesis of branched-chain and/or straight-chain of fatty acids. In Brucella melitensis biotype 2 (strain ATCC 23457), this protein is Beta-ketoacyl-[acyl-carrier-protein] synthase III.